Reading from the N-terminus, the 103-residue chain is Large ribosomal subunit protein uL24 (103 aa).

The protein belongs to the universal ribosomal protein uL24 family. Part of the 50S ribosomal subunit.

One of two assembly initiator proteins, it binds directly to the 5'-end of the 23S rRNA, where it nucleates assembly of the 50S subunit. Functionally, one of the proteins that surrounds the polypeptide exit tunnel on the outside of the subunit. This Dehalococcoides mccartyi (strain ATCC BAA-2100 / JCM 16839 / KCTC 5957 / BAV1) protein is Large ribosomal subunit protein uL24.